The sequence spans 392 residues: Formate-dependent phosphoribosylglycinamide formyltransferase (392 aa).

N(1)-(5-phospho-beta-D-ribosyl)glycinamide-binding positions include 22-23 (EL) and Glu-82. ATP-binding positions include Arg-114, Lys-155, 160–165 (SSGKGQ), 195–198 (EGVV), and Glu-203. One can recognise an ATP-grasp domain in the interval 119 to 308 (RLAAEELGLP…EFALHVRAFL (190 aa)). The Mg(2+) site is built by Glu-267 and Glu-279. N(1)-(5-phospho-beta-D-ribosyl)glycinamide is bound by residues Asp-286, Lys-355, and 362–363 (RR).

It belongs to the PurK/PurT family. Homodimer.

It catalyses the reaction N(1)-(5-phospho-beta-D-ribosyl)glycinamide + formate + ATP = N(2)-formyl-N(1)-(5-phospho-beta-D-ribosyl)glycinamide + ADP + phosphate + H(+). It functions in the pathway purine metabolism; IMP biosynthesis via de novo pathway; N(2)-formyl-N(1)-(5-phospho-D-ribosyl)glycinamide from N(1)-(5-phospho-D-ribosyl)glycinamide (formate route): step 1/1. In terms of biological role, involved in the de novo purine biosynthesis. Catalyzes the transfer of formate to 5-phospho-ribosyl-glycinamide (GAR), producing 5-phospho-ribosyl-N-formylglycinamide (FGAR). Formate is provided by PurU via hydrolysis of 10-formyl-tetrahydrofolate. The protein is Formate-dependent phosphoribosylglycinamide formyltransferase of Salmonella dublin (strain CT_02021853).